A 226-amino-acid polypeptide reads, in one-letter code: Thiopurine S-methyltransferase (226 aa).

4 residues coordinate S-adenosyl-L-methionine: Trp-16, Met-51, Glu-72, and Arg-131.

This sequence belongs to the class I-like SAM-binding methyltransferase superfamily. TPMT family.

It is found in the cytoplasm. It carries out the reaction S-adenosyl-L-methionine + a thiopurine = S-adenosyl-L-homocysteine + a thiopurine S-methylether.. The polypeptide is Thiopurine S-methyltransferase (Francisella tularensis subsp. novicida (strain U112)).